Here is a 474-residue protein sequence, read N- to C-terminus: Trehalose-6-phosphate synthase (474 aa).

Arg-10 contacts D-glucose 6-phosphate. Gly-22–Gly-23 is a UDP-alpha-D-glucose binding site. Tyr-77 and Asp-131 together coordinate D-glucose 6-phosphate. UDP-alpha-D-glucose contacts are provided by Arg-263 and Lys-268. A D-glucose 6-phosphate-binding site is contributed by Arg-301. UDP-alpha-D-glucose contacts are provided by residues Phe-340 and Leu-366–Glu-370.

This sequence belongs to the glycosyltransferase 20 family. As to quaternary structure, homotetramer.

The catalysed reaction is D-glucose 6-phosphate + UDP-alpha-D-glucose = alpha,alpha-trehalose 6-phosphate + UDP + H(+). It participates in glycan biosynthesis; trehalose biosynthesis. In terms of biological role, probably involved in the osmoprotection via the biosynthesis of trehalose. Catalyzes the transfer of glucose from UDP-alpha-D-glucose (UDP-Glc) to D-glucose 6-phosphate (Glc-6-P) to form trehalose-6-phosphate. Acts with retention of the anomeric configuration of the UDP-sugar donor. The chain is Trehalose-6-phosphate synthase from Klebsiella pneumoniae subsp. pneumoniae (strain ATCC 700721 / MGH 78578).